Reading from the N-terminus, the 142-residue chain is Hemoglobin subunit alpha-A (142 aa).

One can recognise a Globin domain in the interval 2 to 142 (VLSPTDKSIV…VSTVLTSKYR (141 aa)). His-59 contributes to the O2 binding site. His-88 is a binding site for heme b.

Belongs to the globin family. In terms of assembly, heterotetramer of two alpha chains and two beta chains. Red blood cells.

Functionally, involved in oxygen transport from the lung to the various peripheral tissues. The sequence is that of Hemoglobin subunit alpha-A (HBAA) from Otolemur crassicaudatus (Brown greater galago).